The chain runs to 141 residues: Transmembrane protein 216 (141 aa).

4 helical membrane-spanning segments follow: residues 15-35, 49-69, 82-102, and 115-135; these read ILFF…LFIF, LVLD…RLFF, LGIS…YLLL, and SILL…LTAF.

As to quaternary structure, part of the tectonic-like complex (also named B9 complex). Interacts with TMEM107.

It localises to the membrane. The protein localises to the cytoplasm. The protein resides in the cytoskeleton. Its subcellular location is the cilium basal body. In terms of biological role, part of the tectonic-like complex which is required for tissue-specific ciliogenesis and may regulate ciliary membrane composition. The sequence is that of Transmembrane protein 216 (TMEM216) from Bos taurus (Bovine).